We begin with the raw amino-acid sequence, 394 residues long: Elongation factor Tu (394 aa).

One can recognise a tr-type G domain in the interval 10-205 (KPHMNVGTIG…TMDNYFDLPQ (196 aa)). The G1 stretch occupies residues 19–26 (GHVDHGKT). 19–26 (GHVDHGKT) contacts GTP. T26 serves as a coordination point for Mg(2+). The segment at 61 to 65 (GITIN) is G2. The tract at residues 82–85 (DCPG) is G3. GTP-binding positions include 82–86 (DCPGH) and 137–140 (NKLD). Residues 137 to 140 (NKLD) are G4. Residues 173 to 175 (SAF) are G5.

It belongs to the TRAFAC class translation factor GTPase superfamily. Classic translation factor GTPase family. EF-Tu/EF-1A subfamily. Monomer.

The protein resides in the cytoplasm. The enzyme catalyses GTP + H2O = GDP + phosphate + H(+). In terms of biological role, GTP hydrolase that promotes the GTP-dependent binding of aminoacyl-tRNA to the A-site of ribosomes during protein biosynthesis. The protein is Elongation factor Tu of Borrelia turicatae (strain 91E135).